The primary structure comprises 150 residues: Large ribosomal subunit protein eL19 (150 aa).

A disordered region spans residues 59–89; that stretch reads SRYRARIRHEQKKKGRHRGPGSRKGKKTARM. The span at 61 to 89 shows a compositional bias: basic residues; the sequence is YRARIRHEQKKKGRHRGPGSRKGKKTARM.

The protein belongs to the eukaryotic ribosomal protein eL19 family. As to quaternary structure, part of the 50S ribosomal subunit.

Binds to the 23S rRNA. This Pyrococcus horikoshii (strain ATCC 700860 / DSM 12428 / JCM 9974 / NBRC 100139 / OT-3) protein is Large ribosomal subunit protein eL19.